Here is a 572-residue protein sequence, read N- to C-terminus: Phosphoenolpyruvate-protein phosphotransferase (572 aa).

His190 functions as the Tele-phosphohistidine intermediate in the catalytic mechanism. 2 residues coordinate phosphoenolpyruvate: Arg297 and Arg333. The Mg(2+) site is built by Glu427 and Asp451. Residues 450 to 451 (ND) and Arg461 each bind phosphoenolpyruvate. The active-site Proton donor is Cys498.

Belongs to the PEP-utilizing enzyme family. In terms of assembly, homodimer. Mg(2+) serves as cofactor.

The protein resides in the cytoplasm. It catalyses the reaction L-histidyl-[protein] + phosphoenolpyruvate = N(pros)-phospho-L-histidyl-[protein] + pyruvate. General (non sugar-specific) component of the phosphoenolpyruvate-dependent sugar phosphotransferase system (sugar PTS). This major carbohydrate active-transport system catalyzes the phosphorylation of incoming sugar substrates concomitantly with their translocation across the cell membrane. Enzyme I transfers the phosphoryl group from phosphoenolpyruvate (PEP) to the phosphoryl carrier protein (HPr). This is Phosphoenolpyruvate-protein phosphotransferase (ptsI) from Mycoplasma pneumoniae (strain ATCC 29342 / M129 / Subtype 1) (Mycoplasmoides pneumoniae).